Reading from the N-terminus, the 291-residue chain is Ribosomal RNA small subunit methyltransferase A (291 aa).

6 residues coordinate S-adenosyl-L-methionine: His-21, Leu-23, Gly-48, Glu-70, Asp-95, and Asn-115.

This sequence belongs to the class I-like SAM-binding methyltransferase superfamily. rRNA adenine N(6)-methyltransferase family. RsmA subfamily.

It is found in the cytoplasm. It carries out the reaction adenosine(1518)/adenosine(1519) in 16S rRNA + 4 S-adenosyl-L-methionine = N(6)-dimethyladenosine(1518)/N(6)-dimethyladenosine(1519) in 16S rRNA + 4 S-adenosyl-L-homocysteine + 4 H(+). Specifically dimethylates two adjacent adenosines (A1518 and A1519) in the loop of a conserved hairpin near the 3'-end of 16S rRNA in the 30S particle. May play a critical role in biogenesis of 30S subunits. This is Ribosomal RNA small subunit methyltransferase A from Prochlorococcus marinus (strain NATL1A).